Here is a 137-residue protein sequence, read N- to C-terminus: Cell division protein SepF (137 aa).

Belongs to the SepF family. As to quaternary structure, homodimer. Interacts with FtsZ.

The protein localises to the cytoplasm. Its function is as follows. Cell division protein that is part of the divisome complex and is recruited early to the Z-ring. Probably stimulates Z-ring formation, perhaps through the cross-linking of FtsZ protofilaments. Its function overlaps with FtsA. The polypeptide is Cell division protein SepF (Carboxydothermus hydrogenoformans (strain ATCC BAA-161 / DSM 6008 / Z-2901)).